We begin with the raw amino-acid sequence, 378 residues long: Stimulator of interferon genes protein (378 aa).

At 1-17 the chain is on the cytoplasmic side; that stretch reads MPYSSLHPSIPQPRGLR. The tract at residues 1–190 is mediates interaction with ZDHHC1 and ZDHHC11; the sequence is MPYSSLHPSI…AYNQRHKNVL (190 aa). A helical transmembrane segment spans residues 18–34; sequence AQVAALVLLGACLVALW. Over 35 to 44 the chain is Lumenal; that stretch reads GLGELPEYTL. The chain crosses the membrane as a helical span at residues 45–69; the sequence is RWLVLHLASQQIGLLVKGLCSLAEE. The Cytoplasmic portion of the chain corresponds to 70–91; that stretch reads LCHVHSRYQSSYWRAARACLGC. Residues C88 and C91 are each lipidated (S-palmitoyl cysteine). The helical transmembrane segment at 92-106 threads the bilayer; that stretch reads PIRCGALLLLSCYFY. At 107–116 the chain is on the lumenal side; it reads FSIRDKAGLP. Residues 117-134 traverse the membrane as a helical segment; it reads LPWMLALLGLSQALNILL. Residues 135–378 are Cytoplasmic-facing; sequence GLQHLAPAEV…QPLPLRSDIF (244 aa). K150 is covalently cross-linked (Glycyl lysine isopeptide (Lys-Gly) (interchain with G-Cter in ubiquitin)). Residues 153-339 are cyclic dinucleotide-binding domain (CBD); sequence FNVAHGLAWS…LRHLRQEERE (187 aa). The 2',3'-cGAMP site is built by S162 and Y167. 3',3'-c-di-GMP is bound by residues S162 and Y167. Residue Y167 participates in 2',3'-cUAMP binding. Residue K236 forms a Glycyl lysine isopeptide (Lys-Gly) (interchain with G-Cter in ubiquitin) linkage. The 2',3'-cGAMP site is built by R238 and T263. Residues R238 and T263 each coordinate 2',3'-cUAMP. 3',3'-c-di-GMP is bound by residues 238–241 and T263; that span reads RVYT. Residues 339 to 378 are C-terminal tail (CTT); that stretch reads EVTMGSAETSVVPTSSTLSQEPELLISGMEQPLPLRSDIF. S354 bears the Phosphoserine mark. Position 355 is a phosphothreonine (T355). Phosphoserine; by TBK1 occurs at positions 357 and 365. Positions 362-365 match the pLxIS motif motif; that stretch reads LLIS.

The protein belongs to the STING family. In terms of assembly, homodimer; forms a homodimer in absence of cyclic nucleotide (c-di-GMP or cGAMP); 'Lys-63'-linked ubiquitination at Lys-150 is required for homodimerization. Homotetramer; in presence of cyclic nucleotide (c-di-GMP or cGAMP), forms tetramers and higher-order oligomers through side-by-side packing. Interacts (when phosphorylated) with IRF3; following activation and phosphorylation on the pLxIS motif by TBK1, recruits IRF3. Interacts with DDX58/RIG-I, MAVS and SSR2. Interacts with RNF5 and TRIM56. Interacts with TBK1; when homodimer, leading to subsequent production of IFN-beta. Interacts with IFIT1 and IFIT2. Interacts with TRIM29; this interaction induces STING1 ubiquitination and subsequent degradation. Associates with the MHC-II complex. Interacts with STEEP1; interaction takes place upon cGAMP-activation and STING1 phosphorylation by MAP3K7/TAK1 and promotes STING1 translocation to COPII vesicles. Interacts with SEC24A, SEC24B and SEC24C; promoting translocation to COPII vesicles. Interacts (when ubiquitinated) with SQSTM1; leading to relocalization to autophagosomes. Interacts with SURF4. Interacts with HNRNPA2B1. Interacts with ZDHHC1; ZDHHC1 constitutively interacts with STING1 and in presence of DNA viruses activates it by promoting its cGAMP-induced oligomerization and the recruitment of downstream signaling components. Interacts with ZDHHC11; in presence of DNA viruses promotes the recruitment of IRF3 to STING1. Interacts with TOMM70. Interacts with TAB1; promoting recruitment of TAB1 to the endoplasmic reticulum membrane and subsequent activation of MAP3K7/TAK1. Interacts (via transmembrane domain) with TMEM203. Interacts with DDX41. As to quaternary structure, (Microbial infection) Interacts with African swine fever virus/ASFV protein A528R; this interaction mediates STING1 degradation. (Microbial infection) Interacts with African swine fever virus/ASFV minor capsid protein p17. In terms of assembly, (Microbial infection) Interacts with Pseudorabies virus protein UL13; this interaction mediates STING1 degradation in a RNF5-dependent manner. Phosphorylation by TBK1 leads to activation and production of IFN-beta. Following cyclic nucleotide (c-di-GMP or cGAMP)-binding, activation and translocation from the endoplasmic reticulum, STING1 is phosphorylated by TBK1 at Ser-365 in the pLxIS motif. The phosphorylated pLxIS motif constitutes an IRF3-binding motif, leading to recruitment of the transcription factor IRF3 to induce type-I interferons and other cytokines. Phosphorylated on tyrosine residues upon MHC-II aggregation. Dephosphorylation by PPP6C leads to inactivation and decreased production of IFN-beta. Phosphorylation at Ser-357 is also required to activate IRF3. Phosphorylation at Ser-354 by MAP3K7/TAK1 facilitates its interaction with STEEP1, promoting STING1 translocation to COPII vesicles. Post-translationally, ubiquitinated. Ubiquitinated via 'Lys-63'-linked ubiquitin chains in response to double-stranded DNA treatment, leading to relocalization to autophagosomes and subsequent degradation; this process is dependent on SQSTM1. 'Lys-63'-linked ubiquitination mediated by TRIM56 at Lys-150 promotes homodimerization and recruitment of the antiviral kinase TBK1 and subsequent production of IFN-beta. 'Lys-48'-linked polyubiquitination at Lys-150 occurring after viral infection is mediated by RNF5 and leads to proteasomal degradation. 'Lys-11'-linked polyubiquitination at Lys-150 by RNF26 leads to stabilize STING1: it protects STING1 from RNF5-mediated 'Lys-48'-linked polyubiquitination. 'Lys-33'-linked and 'Lys-48'-linked deubiquitinated by USP20; leading to its stabilization and promotion of innate antiviral response. 'Lys-48'-linked deubiquitinated by USP44; leading to its stabilization and promotion of innate antiviral response. Deubiquitinated by USP13; leading to inhibition of innate antiviral response. 'Lys-63'-linked deubiquitinated by USP49; leading to inhibition of the subsequent recruitment of TBK1 to the signaling complex. 'Lys-63'-linked ubiquitination mediated by RNF39 promotes the activation of the cGAS-STING pathway. In terms of processing, palmitoylation takes place in the Golgi apparatus and creates a platform for the recruitment of TBK1. As to expression, expressed at higher level in the spleen, lymph node, lung and bone marrow, followed by the small intestine, heart, liver and brain, and to a lesser extent in the stomach and kidney.

It localises to the endoplasmic reticulum membrane. Its subcellular location is the cytoplasm. The protein localises to the perinuclear region. It is found in the endoplasmic reticulum-Golgi intermediate compartment membrane. The protein resides in the golgi apparatus membrane. It localises to the cytoplasmic vesicle. Its subcellular location is the autophagosome membrane. The protein localises to the mitochondrion outer membrane. It is found in the cell membrane. The catalysed reaction is H(+)(in) = H(+)(out). Its function is as follows. Facilitator of innate immune signaling that acts as a sensor of cytosolic DNA from bacteria and viruses and promotes the production of type I interferon (IFN-alpha and IFN-beta). Innate immune response is triggered in response to non-CpG double-stranded DNA from viruses and bacteria delivered to the cytoplasm. Acts by binding cyclic dinucleotides: recognizes and binds cyclic di-GMP (c-di-GMP), a second messenger produced by bacteria, cyclic UMP-AMP (2',3'-cUAMP), and cyclic GMP-AMP (cGAMP), a messenger produced by CGAS in response to DNA virus in the cytosol. Upon binding to c-di-GMP, cUAMP or cGAMP, STING1 oligomerizes, translocates from the endoplasmic reticulum and is phosphorylated by TBK1 on the pLxIS motif, leading to recruitment and subsequent activation of the transcription factor IRF3 to induce expression of type I interferon and exert a potent anti-viral state. Exhibits 2',3' phosphodiester linkage-specific ligand recognition: can bind both 2'-3' linked cGAMP (2'-3'-cGAMP) and 3'-3' linked cGAMP but is preferentially activated by 2'-3' linked cGAMP. The preference for 2'-3'-cGAMP, compared to other linkage isomers is probably due to the ligand itself, whichs adopts an organized free-ligand conformation that resembles the STING1-bound conformation and pays low energy costs in changing into the active conformation. In addition to promote the production of type I interferons, plays a direct role in autophagy. Following cGAMP-binding, STING1 buds from the endoplasmic reticulum into COPII vesicles, which then form the endoplasmic reticulum-Golgi intermediate compartment (ERGIC). The ERGIC serves as the membrane source for WIPI2 recruitment and LC3 lipidation, leading to formation of autophagosomes that target cytosolic DNA or DNA viruses for degradation by the lysosome. Promotes autophagy by acting as a proton channel that directs proton efflux from the Golgi to facilitate MAP1LC3B/LC3B lipidation. The autophagy- and interferon-inducing activities can be uncoupled and autophagy induction is independent of TBK1 phosphorylation. Autophagy is also triggered upon infection by bacteria: following c-di-GMP-binding, which is produced by live Gram-positive bacteria, promotes reticulophagy. May be involved in translocon function, the translocon possibly being able to influence the induction of type I interferons. May be involved in transduction of apoptotic signals via its association with the major histocompatibility complex class II (MHC-II). In Sus scrofa (Pig), this protein is Stimulator of interferon genes protein.